The chain runs to 148 residues: MPMDIQKIREYLPHRYPFLLVDRVVEVGENNIVGYKNVSINEEFFQGHFPDYPIMPGVLIVEALAQISGILGFIMNNETPKPGSLFLFAGAEKVRFKKQVVAGDQLVLKAELVMQKRGIYKYNCTATVDGKVATTAEIIVSHLRTEQA.

Histidine 48 is a catalytic residue.

It belongs to the thioester dehydratase family. FabZ subfamily.

Its subcellular location is the cytoplasm. The enzyme catalyses a (3R)-hydroxyacyl-[ACP] = a (2E)-enoyl-[ACP] + H2O. In terms of biological role, involved in unsaturated fatty acids biosynthesis. Catalyzes the dehydration of short chain beta-hydroxyacyl-ACPs and long chain saturated and unsaturated beta-hydroxyacyl-ACPs. The sequence is that of 3-hydroxyacyl-[acyl-carrier-protein] dehydratase FabZ from Acinetobacter baylyi (strain ATCC 33305 / BD413 / ADP1).